A 293-amino-acid polypeptide reads, in one-letter code: Ribonuclease Z (293 aa).

Residues H60, H62, D64, H65, H132, D200, and H256 each coordinate Zn(2+). D64 (proton acceptor) is an active-site residue.

This sequence belongs to the RNase Z family. Homodimer. The cofactor is Zn(2+).

The enzyme catalyses Endonucleolytic cleavage of RNA, removing extra 3' nucleotides from tRNA precursor, generating 3' termini of tRNAs. A 3'-hydroxy group is left at the tRNA terminus and a 5'-phosphoryl group is left at the trailer molecule.. In terms of biological role, zinc phosphodiesterase, which displays some tRNA 3'-processing endonuclease activity. Probably involved in tRNA maturation, by removing a 3'-trailer from precursor tRNA. The chain is Ribonuclease Z from Sulfurisphaera tokodaii (strain DSM 16993 / JCM 10545 / NBRC 100140 / 7) (Sulfolobus tokodaii).